The chain runs to 163 residues: Nucleotide-binding protein HS_0688 (163 aa).

Belongs to the YajQ family.

Nucleotide-binding protein. In Histophilus somni (strain 129Pt) (Haemophilus somnus), this protein is Nucleotide-binding protein HS_0688.